A 143-amino-acid polypeptide reads, in one-letter code: uncharacterized protein (143 aa).

Residues 35 to 59 form a disordered region; it reads ITKDRGDRDDGRYGEPRIQRKPGQL. The span at 36 to 52 shows a compositional bias: basic and acidic residues; it reads TKDRGDRDDGRYGEPRI.

This is an uncharacterized protein from Streptomyces fradiae (Streptomyces roseoflavus).